A 480-amino-acid chain; its full sequence is EGF-like repeat and discoidin I-like domain-containing protein 3 (480 aa).

An N-terminal signal peptide occupies residues 1–23; the sequence is MKHLVAAWLLVGLSLGVPQFGKG. An EGF-like 1 domain is found at 24-60; the sequence is DICNPNPCENGGICLSGLADDSFSCECPEGFAGPNCS. 3 disulfide bridges follow: cysteine 26–cysteine 37, cysteine 31–cysteine 48, and cysteine 50–cysteine 59. Threonine 73 carries O-linked (GalNAc...) threonine glycosylation. EGF-like domains follow at residues 74-117 and 119-155; these read SAGP…IHCQ and NINE…RNCQ. Disulfide bonds link cysteine 78–cysteine 89, cysteine 83–cysteine 105, and cysteine 107–cysteine 116. Threonine 88 is a glycosylation site (O-linked (Fuc...) threonine). The Cell attachment site motif lies at 96–98; the sequence is RGD. The Ca(2+) site is built by asparagine 119, isoleucine 120, and glutamate 122. 6 disulfides stabilise this stretch: cysteine 123–cysteine 134, cysteine 128–cysteine 143, cysteine 145–cysteine 154, cysteine 158–cysteine 314, cysteine 301–cysteine 305, and cysteine 319–cysteine 476. Aspartate 136 and leucine 137 together coordinate Ca(2+). Asparagine 140 carries N-linked (GlcNAc...) asparagine glycosylation. F5/8 type C domains follow at residues 158–314 and 319–476; these read CSGP…LLGC and CSEP…LLGC.

As to expression, expressed in angioblasts and early endothelial cells. By embryonic day 13.5, also expressed in a restricted group of non-endothelial cells including chondrocytes and retinal neurons.

Its subcellular location is the secreted. Promotes adhesion of endothelial cells through interaction with the alpha-v/beta-3 integrin receptor. Inhibits formation of vascular-like structures. May be involved in regulation of vascular morphogenesis of remodeling in embryonic development. This chain is EGF-like repeat and discoidin I-like domain-containing protein 3 (Edil3), found in Mus musculus (Mouse).